The chain runs to 519 residues: F-box only protein 31-A (519 aa).

Positions 11 to 37 (GQSGGCRRRQQRKGAGNDPELEDEEEE) are disordered. Residues 54 to 100 (PHSLLLLPPEILVEIFSLLPGTELGGLAQVCSKFRQILTTDTIWKRR) enclose the F-box domain. Residues C196, H204, C220, and H226 each coordinate Zn(2+). Over residues 369–390 (REQRQTDNEEDDGRGAGPDKAE) the composition is skewed to basic and acidic residues. The tract at residues 369–424 (REQRQTDNEEDDGRGAGPDKAEPAQQPAPLLRPPNEDANGADDDGDGGEQKPPNVQ) is disordered.

Belongs to the FBXO31 family. Part of a SCF (SKP1-cullin-F-box) protein ligase complex SCF(FBXO31).

It localises to the cytoplasm. It participates in protein modification; protein ubiquitination. Its function is as follows. Substrate-recognition component of the SCF(FBXO31) protein ligase complex, which specifically mediates the ubiquitination of proteins amidated at their C-terminus in response to oxidative stress, leading to their degradation by the proteasome. Fbxo31 specifically recognizes and binds C-terminal peptides bearing an amide: C-terminal amidation in response to oxidative stress takes place following protein fragmentation. The SCF(FBXO31) also plays a role in G1 arrest following DNA damage by mediating ubiquitination of phosphorylated cyclin-D1 (ccnd1), promoting its degradation by the proteasome, resulting in G1 arrest. The SCF(FBXO31) complex is however not a major regulator of ccnd1 stability during the G1/S transition. The sequence is that of F-box only protein 31-A (fbxo31-a) from Xenopus laevis (African clawed frog).